The sequence spans 179 residues: Small ribosomal subunit protein uS5 (179 aa).

The 64-residue stretch at 22-85 (MIEKLVAVNR…EYARKTMANV (64 aa)) folds into the S5 DRBM domain.

The protein belongs to the universal ribosomal protein uS5 family. Part of the 30S ribosomal subunit. Contacts proteins S4 and S8.

With S4 and S12 plays an important role in translational accuracy. Functionally, located at the back of the 30S subunit body where it stabilizes the conformation of the head with respect to the body. This is Small ribosomal subunit protein uS5 from Xylella fastidiosa (strain 9a5c).